A 163-amino-acid polypeptide reads, in one-letter code: uncharacterized protein (163 aa).

This is an uncharacterized protein from Mycoplasma pneumoniae (strain ATCC 29342 / M129 / Subtype 1) (Mycoplasmoides pneumoniae).